The chain runs to 267 residues: Orotidine 5'-phosphate decarboxylase (267 aa).

Residues Asp-37, 59–61 (KTH), 91–100 (DRKFADIGNT), Tyr-217, and Arg-235 each bind substrate. Lys-93 serves as the catalytic Proton donor.

This sequence belongs to the OMP decarboxylase family.

The enzyme catalyses orotidine 5'-phosphate + H(+) = UMP + CO2. The protein operates within pyrimidine metabolism; UMP biosynthesis via de novo pathway; UMP from orotate: step 2/2. This chain is Orotidine 5'-phosphate decarboxylase (URA3), found in Eremothecium gossypii (strain ATCC 10895 / CBS 109.51 / FGSC 9923 / NRRL Y-1056) (Yeast).